The sequence spans 125 residues: CLAVATA3/ESR (CLE)-related protein ESR3 (125 aa).

The N-terminal stretch at 1 to 26 (MASRMGMVAIMSLFVYAIVVPTSVNA) is a signal peptide. The tract at residues 45 to 125 (QQQGGFIGHR…IGPPPLPDRY (81 aa)) is disordered. Hydroxyproline occurs at positions 75 and 78. Proline 78 carries an O-linked (Ara...) hydroxyproline glycan.

It belongs to the CLV3/ESR signal peptide family. In terms of processing, the O-glycosylation (arabinosylation) of the hydroxyproline Pro-78 enhances binding affinity of the ESR3p peptide for its receptor. In terms of tissue distribution, seed endosperm.

The protein resides in the secreted. Its subcellular location is the extracellular space. Its function is as follows. Extracellular signal peptide that regulates cell fate. The chain is CLAVATA3/ESR (CLE)-related protein ESR3 from Zea mays (Maize).